A 424-amino-acid chain; its full sequence is Phosphomethylpyrimidine synthase (424 aa).

Residues Met94, Tyr123, His162, 184–186 (SRG), 225–228 (NGMR), and Glu264 contribute to the substrate site. His268 serves as a coordination point for Zn(2+). Tyr291 is a binding site for substrate. His332 contributes to the Zn(2+) binding site. [4Fe-4S] cluster-binding residues include Cys406, Cys409, and Cys413.

It belongs to the ThiC family. [4Fe-4S] cluster serves as cofactor.

It catalyses the reaction 5-amino-1-(5-phospho-beta-D-ribosyl)imidazole + S-adenosyl-L-methionine = 4-amino-2-methyl-5-(phosphooxymethyl)pyrimidine + CO + 5'-deoxyadenosine + formate + L-methionine + 3 H(+). It participates in cofactor biosynthesis; thiamine diphosphate biosynthesis. Catalyzes the synthesis of the hydroxymethylpyrimidine phosphate (HMP-P) moiety of thiamine from aminoimidazole ribotide (AIR) in a radical S-adenosyl-L-methionine (SAM)-dependent reaction. The polypeptide is Phosphomethylpyrimidine synthase (Methanoculleus marisnigri (strain ATCC 35101 / DSM 1498 / JR1)).